Consider the following 93-residue polypeptide: SH3 domain-binding glutamic acid-rich-like protein 3 (93 aa).

Ser-2 carries the post-translational modification N-acetylserine. The Glutaredoxin domain occupies 2–93; the sequence is SGLRVYSTSV…NTLQEFLKLA (92 aa). An O-linked (GalNAc...) threonine glycan is attached at Thr-9.

The protein belongs to the SH3BGR family. Homodimer. Interacts with MYO1C (via its IQ motifs); the interaction is dependent on calcium and takes place at membrane ruffles. In terms of processing, may be glycosylated.

Its subcellular location is the cytoplasm. The protein resides in the cytosol. It localises to the cell projection. It is found in the ruffle membrane. The protein localises to the nucleus. Could act as a modulator of glutaredoxin biological activity. May play a role in cytoskeleton organization. This Bos taurus (Bovine) protein is SH3 domain-binding glutamic acid-rich-like protein 3 (SH3BGRL3).